We begin with the raw amino-acid sequence, 849 residues long: DNA mismatch repair protein MutS (849 aa).

602 to 609 (GPNMSGKS) provides a ligand contact to ATP.

This sequence belongs to the DNA mismatch repair MutS family.

This protein is involved in the repair of mismatches in DNA. It is possible that it carries out the mismatch recognition step. This protein has a weak ATPase activity. In Streptococcus sanguinis (strain SK36), this protein is DNA mismatch repair protein MutS.